Reading from the N-terminus, the 410-residue chain is Serine hydroxymethyltransferase (410 aa).

(6S)-5,6,7,8-tetrahydrofolate-binding positions include Leu116 and 120-122 (GHL). Lys225 is modified (N6-(pyridoxal phosphate)lysine). 349–351 (SPF) lines the (6S)-5,6,7,8-tetrahydrofolate pocket.

The protein belongs to the SHMT family. In terms of assembly, homodimer. It depends on pyridoxal 5'-phosphate as a cofactor.

The protein resides in the cytoplasm. The catalysed reaction is (6R)-5,10-methylene-5,6,7,8-tetrahydrofolate + glycine + H2O = (6S)-5,6,7,8-tetrahydrofolate + L-serine. It functions in the pathway one-carbon metabolism; tetrahydrofolate interconversion. Its pathway is amino-acid biosynthesis; glycine biosynthesis; glycine from L-serine: step 1/1. Catalyzes the reversible interconversion of serine and glycine with tetrahydrofolate (THF) serving as the one-carbon carrier. This reaction serves as the major source of one-carbon groups required for the biosynthesis of purines, thymidylate, methionine, and other important biomolecules. Also exhibits THF-independent aldolase activity toward beta-hydroxyamino acids, producing glycine and aldehydes, via a retro-aldol mechanism. This chain is Serine hydroxymethyltransferase, found in Leuconostoc citreum (strain KM20).